Consider the following 492-residue polypeptide: Adenosylhomocysteinase (492 aa).

T68, D153, and E215 together coordinate substrate. T216–T218 is a binding site for NAD(+). The substrate site is built by K245 and D249. NAD(+)-binding positions include N250, G279–G284, E302, N337, I358–H360, and N406.

The protein belongs to the adenosylhomocysteinase family. The cofactor is NAD(+).

Its subcellular location is the cytoplasm. It carries out the reaction S-adenosyl-L-homocysteine + H2O = L-homocysteine + adenosine. Its pathway is amino-acid biosynthesis; L-homocysteine biosynthesis; L-homocysteine from S-adenosyl-L-homocysteine: step 1/1. May play a key role in the regulation of the intracellular concentration of adenosylhomocysteine. In Mycobacterium ulcerans (strain Agy99), this protein is Adenosylhomocysteinase.